A 173-amino-acid polypeptide reads, in one-letter code: CKLF-like MARVEL transmembrane domain-containing protein 8 (173 aa).

One can recognise an MARVEL domain in the interval 36–168 (FLRTPPGLLI…NTYFSFIAWR (133 aa)). 4 consecutive transmembrane segments (helical) span residues 41–61 (PGLL…LIAG), 70–90 (FGWV…FLIV), 105–125 (TTVG…AAIV), and 147–167 (FFAF…FIAW).

Belongs to the chemokine-like factor family.

It is found in the membrane. The sequence is that of CKLF-like MARVEL transmembrane domain-containing protein 8 (Cmtm8) from Mus musculus (Mouse).